The chain runs to 259 residues: uncharacterized protein (259 aa).

The stretch at 158–187 forms a coiled coil; it reads VELHLKIIEEDMKETTKKNKEKKQNSQSQE. Positions 172 to 181 are enriched in basic and acidic residues; that stretch reads TTKKNKEKKQ. Disordered stretches follow at residues 172–197 and 217–240; these read TTKK…MEVS and PVKK…QLSK. Low complexity-rich tracts occupy residues 182 to 193 and 217 to 226; these read NSQSQEISNSIE and PVKKTSSASK.

This is an uncharacterized protein from Acanthamoeba polyphaga mimivirus (APMV).